Reading from the N-terminus, the 148-residue chain is Flavodoxin (148 aa).

Positions 4–145 constitute a Flavodoxin-like domain; the sequence is VLIVYGSTTG…DVSAWAGRVV (142 aa).

Belongs to the flavodoxin family. FMN serves as cofactor.

In terms of biological role, low-potential electron donor to a number of redox enzymes. The protein is Flavodoxin of Nitratidesulfovibrio vulgaris (strain DSM 19637 / Miyazaki F) (Desulfovibrio vulgaris).